A 369-amino-acid chain; its full sequence is MELEARAEPRSPRAGRGEEEEDEDEELRLAKRRKVLCSEFAAVTSSDEAVASGFLAGSGWHLERALDAYFEAPMNEQTTAAAAGGGSAGPGSCIDLTADDTASNTSSSGADSKQQDDDSSFSLITWNIDGLDLGNLQERARGVCSYLALYSPDVVFLQEVIPPYLCILQRRAGGYTIIPGNVDGYFTAMLLKKPRVKVLKQEIIRFPTTSMMRNLLVVHVNISGNELCLMTSHLESTRDHSKERMKQLQIVLNKMQEESQSTTVIFGGDTNLRDSEVAKLGGLPKNITDIWEFLGKPQHCRYTWDTSSNTNLRIESKCKLRFDRLYFRPAAEGGHIIPRNMDLIGLEKLDCGRFPSDHWGLLCRFDVIL.

The segment covering 1–17 has biased composition (basic and acidic residues); that stretch reads MELEARAEPRSPRAGRG. Disordered stretches follow at residues 1 to 26 and 80 to 117; these read MELEARAEPRSPRAGRGEEEEDEDEE and AAAAGGGSAGPGSCIDLTADDTASNTSSSGADSKQQDD. The segment covering 99–112 has biased composition (low complexity); the sequence is DDTASNTSSSGADS. The interval 127–131 is interaction with 5' end of substrate DNA; it reads NIDGL. Positions 129 and 159 each coordinate Mg(2+). An interaction with 5' end of substrate DNA region spans residues 233–238; sequence HLESTR. Residue aspartate 269 is the Proton donor/acceptor of the active site. The tract at residues 271–273 is interaction with 5' end of substrate DNA; it reads NLR.

The protein belongs to the CCR4/nocturin family. TTRAP/TDP2 subfamily. Requires Mg(2+) as cofactor. Mn(2+) serves as cofactor.

Its subcellular location is the nucleus. The protein resides in the PML body. Functionally, DNA repair enzyme that can remove a variety of covalent adducts from DNA through hydrolysis of a 5'-phosphodiester bond, giving rise to DNA with a free 5' phosphate. Catalyzes the hydrolysis of dead-end complexes between DNA and the topoisomerase 2 (TOP2) active site tyrosine residue. Hydrolyzes 5'-phosphoglycolates on protruding 5' ends on DNA double-strand breaks (DSBs) due to DNA damage by radiation and free radicals. The 5'-tyrosyl DNA phosphodiesterase activity can enable the repair of TOP2-induced DSBs without the need for nuclease activity, creating a 'clean' DSB with 5'-phosphate termini that are ready for ligation. Also has 3'-tyrosyl DNA phosphodiesterase activity, but less efficiently and much slower than TDP1. This is Tyrosyl-DNA phosphodiesterase 2 (TDP2) from Gallus gallus (Chicken).